Consider the following 272-residue polypeptide: Imidazole glycerol phosphate synthase subunit HisF (272 aa).

Catalysis depends on residues Asp-11 and Asp-130.

It belongs to the HisA/HisF family. Heterodimer of HisH and HisF.

The protein resides in the cytoplasm. It catalyses the reaction 5-[(5-phospho-1-deoxy-D-ribulos-1-ylimino)methylamino]-1-(5-phospho-beta-D-ribosyl)imidazole-4-carboxamide + L-glutamine = D-erythro-1-(imidazol-4-yl)glycerol 3-phosphate + 5-amino-1-(5-phospho-beta-D-ribosyl)imidazole-4-carboxamide + L-glutamate + H(+). It functions in the pathway amino-acid biosynthesis; L-histidine biosynthesis; L-histidine from 5-phospho-alpha-D-ribose 1-diphosphate: step 5/9. IGPS catalyzes the conversion of PRFAR and glutamine to IGP, AICAR and glutamate. The HisF subunit catalyzes the cyclization activity that produces IGP and AICAR from PRFAR using the ammonia provided by the HisH subunit. In Methanococcus maripaludis (strain C6 / ATCC BAA-1332), this protein is Imidazole glycerol phosphate synthase subunit HisF.